We begin with the raw amino-acid sequence, 237 residues long: Phosphoribosylaminoimidazole-succinocarboxamide synthase (237 aa).

This sequence belongs to the SAICAR synthetase family.

It catalyses the reaction 5-amino-1-(5-phospho-D-ribosyl)imidazole-4-carboxylate + L-aspartate + ATP = (2S)-2-[5-amino-1-(5-phospho-beta-D-ribosyl)imidazole-4-carboxamido]succinate + ADP + phosphate + 2 H(+). It participates in purine metabolism; IMP biosynthesis via de novo pathway; 5-amino-1-(5-phospho-D-ribosyl)imidazole-4-carboxamide from 5-amino-1-(5-phospho-D-ribosyl)imidazole-4-carboxylate: step 1/2. This is Phosphoribosylaminoimidazole-succinocarboxamide synthase from Methanosarcina acetivorans (strain ATCC 35395 / DSM 2834 / JCM 12185 / C2A).